Reading from the N-terminus, the 569-residue chain is Laccase-13 (569 aa).

The N-terminal stretch at 1 to 21 is a signal peptide; the sequence is MEQLRPFFLLLAIFVASLVNA. 2 consecutive Plastocyanin-like domains span residues 29 to 145 and 157 to 308; these read VIQE…PPLS and REIT…YKDA. A glycan (N-linked (GlcNAc...) asparagine) is linked at Asn75. Residues His79, His81, His124, and His126 each coordinate Cu cation. Residues Asn186, Asn296, Asn330, Asn381, Asn391, and Asn432 are each glycosylated (N-linked (GlcNAc...) asparagine). One can recognise a Plastocyanin-like 3 domain in the interval 418-553; the sequence is DFPPTPPVTF…AMVFLVENGE (136 aa). Residues His470, His473, His475, His532, Cys533, His534, and His538 each coordinate Cu cation.

Belongs to the multicopper oxidase family. The cofactor is Cu cation. As to expression, mostly expressed in roots. Also detected in leaves, stems and flowers but not in siliques.

It localises to the secreted. It is found in the extracellular space. The protein localises to the apoplast. It catalyses the reaction 4 hydroquinone + O2 = 4 benzosemiquinone + 2 H2O. Lignin degradation and detoxification of lignin-derived products. In Arabidopsis thaliana (Mouse-ear cress), this protein is Laccase-13 (LAC13).